Reading from the N-terminus, the 472-residue chain is Selenium-binding protein 2 (472 aa).

The residue at position 467 (S467) is a Phosphoserine.

Belongs to the selenium-binding protein family. Post-translationally, the N-terminus is blocked. In terms of tissue distribution, mainly expressed in liver.

It is found in the nucleus. Its subcellular location is the cytoplasm. The protein resides in the cytosol. The protein localises to the membrane. In terms of biological role, selenium- and acetaminophen-binding protein which may be involved in the sensing of reactive xenobiotics in the cytoplasm. May be involved in intra-Golgi protein transport. In Mus musculus (Mouse), this protein is Selenium-binding protein 2 (Selenbp2).